Here is a 734-residue protein sequence, read N- to C-terminus: Mechanosensitive ion channel protein 10 (734 aa).

2 disordered regions span residues 1–75 (MAEQ…LTQR) and 115–136 (SFSRASPNNKSNRSVGSPAPVT). Residues 24-39 (EASRRSKEMASPESEK) show a composition bias toward basic and acidic residues. Residue S34 is modified to Phosphoserine. 2 stretches are compositionally biased toward polar residues: residues 65–75 (PNQNNVGLTQR) and 117–129 (SRASPNNKSNRSV). A phosphoserine mark is found at S128 and S131. The next 6 helical transmembrane spans lie at 164 to 184 (ISTLALIESAFFVVILSALVA), 196 to 216 (FWGLEVWKWCVLVMVIFSGML), 249 to 269 (SVQVFIWLCLILVAWILLFNH), 288 to 308 (LISILTGAFFWLVKTLLLKIL), 516 to 536 (LVTAILMVVTVVIWLLLLEVA), and 551 to 571 (LAFIIGSTCKNLFESIVFVFV).

It belongs to the MscS (TC 1.A.23) family. Detected in the root tip and throughout the vasculature of the root and leaf.

The protein localises to the cell membrane. Mechanosensitive channel that opens in response to stretch forces in the membrane lipid bilayer. The sequence is that of Mechanosensitive ion channel protein 10 (MSL10) from Arabidopsis thaliana (Mouse-ear cress).